A 199-amino-acid chain; its full sequence is Potassium-transporting ATPase KdpC subunit (199 aa).

Residues 7-27 form a helical membrane-spanning segment; it reads PAIVLLLALTLLTGLAYPLAM. The interval 67–86 is disordered; that stretch reads HGRPSATTAADPQDSSKTVP. The segment covering 71–84 has biased composition (polar residues); it reads SATTAADPQDSSKT.

This sequence belongs to the KdpC family. As to quaternary structure, the system is composed of three essential subunits: KdpA, KdpB and KdpC.

Its subcellular location is the cell inner membrane. Its function is as follows. Part of the high-affinity ATP-driven potassium transport (or Kdp) system, which catalyzes the hydrolysis of ATP coupled with the electrogenic transport of potassium into the cytoplasm. This subunit acts as a catalytic chaperone that increases the ATP-binding affinity of the ATP-hydrolyzing subunit KdpB by the formation of a transient KdpB/KdpC/ATP ternary complex. The sequence is that of Potassium-transporting ATPase KdpC subunit from Rhodopseudomonas palustris (strain BisB18).